The primary structure comprises 137 residues: Ribonuclease VapC27 (137 aa).

Residues 7 to 125 (VDTSVAIPLL…ATRDARAKDT (119 aa)) form the PINc domain. Mg(2+)-binding residues include Asp8 and Asp101.

This sequence belongs to the PINc/VapC protein family. As to quaternary structure, interacts with cognate antitoxin VapB27. Mg(2+) is required as a cofactor.

The protein localises to the secreted. Its function is as follows. Probably the toxic component of a type II toxin-antitoxin (TA) system. An RNase. Its cognate antitoxin is VapB27. The protein is Ribonuclease VapC27 of Mycobacterium tuberculosis (strain ATCC 25618 / H37Rv).